A 193-amino-acid chain; its full sequence is ATP-dependent Clp protease proteolytic subunit (193 aa).

The active-site Nucleophile is the S98. H123 is a catalytic residue.

The protein belongs to the peptidase S14 family. In terms of assembly, fourteen ClpP subunits assemble into 2 heptameric rings which stack back to back to give a disk-like structure with a central cavity, resembling the structure of eukaryotic proteasomes.

Its subcellular location is the cytoplasm. The enzyme catalyses Hydrolysis of proteins to small peptides in the presence of ATP and magnesium. alpha-casein is the usual test substrate. In the absence of ATP, only oligopeptides shorter than five residues are hydrolyzed (such as succinyl-Leu-Tyr-|-NHMec, and Leu-Tyr-Leu-|-Tyr-Trp, in which cleavage of the -Tyr-|-Leu- and -Tyr-|-Trp bonds also occurs).. Cleaves peptides in various proteins in a process that requires ATP hydrolysis. Has a chymotrypsin-like activity. Plays a major role in the degradation of misfolded proteins. This chain is ATP-dependent Clp protease proteolytic subunit, found in Clostridium acetobutylicum (strain ATCC 824 / DSM 792 / JCM 1419 / IAM 19013 / LMG 5710 / NBRC 13948 / NRRL B-527 / VKM B-1787 / 2291 / W).